Reading from the N-terminus, the 288-residue chain is Diaminopimelate epimerase (288 aa).

Substrate contacts are provided by Asn-13, Gln-46, and Asn-66. The active-site Proton donor is Cys-75. Residues 76–77 (GN), Asn-166, Asn-199, and 217–218 (ER) each bind substrate. Cys-226 serves as the catalytic Proton acceptor. 227–228 (GT) provides a ligand contact to substrate.

Belongs to the diaminopimelate epimerase family. Homodimer.

It is found in the cytoplasm. The catalysed reaction is (2S,6S)-2,6-diaminopimelate = meso-2,6-diaminopimelate. The protein operates within amino-acid biosynthesis; L-lysine biosynthesis via DAP pathway; DL-2,6-diaminopimelate from LL-2,6-diaminopimelate: step 1/1. Catalyzes the stereoinversion of LL-2,6-diaminopimelate (L,L-DAP) to meso-diaminopimelate (meso-DAP), a precursor of L-lysine and an essential component of the bacterial peptidoglycan. The protein is Diaminopimelate epimerase of Cupriavidus necator (strain ATCC 17699 / DSM 428 / KCTC 22496 / NCIMB 10442 / H16 / Stanier 337) (Ralstonia eutropha).